The sequence spans 1169 residues: ATP-dependent helicase/deoxyribonuclease subunit B (1169 aa).

The UvrD-like helicase ATP-binding domain maps to 1–285 (MEIQFLAGRS…TIFERNHRHL (285 aa)). 8–15 (GRSGSGKT) contributes to the ATP binding site. Residues 280-586 (RNHRHLYTPD…KFALIPPSLD (307 aa)) form the UvrD-like helicase C-terminal domain. The [4Fe-4S] cluster site is built by C801, C1121, C1124, and C1130.

The protein belongs to the helicase family. AddB/RexB type 1 subfamily. As to quaternary structure, heterodimer of AddA and AddB. Requires Mg(2+) as cofactor. [4Fe-4S] cluster serves as cofactor.

Its function is as follows. The heterodimer acts as both an ATP-dependent DNA helicase and an ATP-dependent, dual-direction single-stranded exonuclease. Recognizes the chi site generating a DNA molecule suitable for the initiation of homologous recombination. The AddB subunit has 5' -&gt; 3' nuclease activity but not helicase activity. This Bacillus pumilus (strain SAFR-032) protein is ATP-dependent helicase/deoxyribonuclease subunit B.